Consider the following 265-residue polypeptide: Mlc titration factor A (265 aa).

Residues His-111, His-148, His-152, and Glu-211 each coordinate Zn(2+).

This sequence belongs to the MtfA family. Monomer in solution. Interacts with Mlc. Zn(2+) serves as cofactor.

It localises to the cytoplasm. With respect to regulation, association between Mlc and MtfA may induce structural changes that activate the peptidase activity of MtfA while inactivating the DNA-binding ability of Mlc. The aminopeptidase activity is partially inhibited by metal chelators such as EDTA and phenantroline, but not by inhibitors for serine-, aspartyl-, or cysteine-proteases. Involved in the modulation of the activity of the glucose-phosphotransferase system (glucose-PTS). Interacts with the transcriptional repressor Mlc, preventing its interaction with DNA and leading to the modulation of expression of genes regulated by Mlc, including ptsG, which encodes the PTS system glucose-specific EIICB component. Functionally, shows zinc-dependent metallopeptidase activity. In vitro, can cleave several artificial substrates. The highest activity is observed for L-alanine fused to 4-nitroanilide (L-alanine-pNA). Shows lower activity towards proline-pNA and valine-pNA. The protein is Mlc titration factor A of Klebsiella pneumoniae subsp. pneumoniae (strain ATCC 700721 / MGH 78578).